The sequence spans 82 residues: MAKKKLENLSFEESLNELDTIVQSLEQGELSLEESMTLFERGLNLSQLSQVKLQAAEQKVQILLDKNGTAKLTDFDSSAGES.

It belongs to the XseB family. As to quaternary structure, heterooligomer composed of large and small subunits.

The protein localises to the cytoplasm. The catalysed reaction is Exonucleolytic cleavage in either 5'- to 3'- or 3'- to 5'-direction to yield nucleoside 5'-phosphates.. Functionally, bidirectionally degrades single-stranded DNA into large acid-insoluble oligonucleotides, which are then degraded further into small acid-soluble oligonucleotides. This is Exodeoxyribonuclease 7 small subunit from Colwellia psychrerythraea (strain 34H / ATCC BAA-681) (Vibrio psychroerythus).